The primary structure comprises 351 residues: Ion-translocating oxidoreductase complex subunit D (351 aa).

A run of 4 helical transmembrane segments spans residues 18 to 38 (IMLLVILACIPGIIAQTYFFG), 42 to 62 (LIQVALAIMTAVLAEGAVLHL), 87 to 107 (LPPLAPWWMIVLGTAFAIIIA), and 121 to 141 (PAMVGYVVLLISFPVQMTSWL). The residue at position 185 (Thr-185) is an FMN phosphoryl threonine. 5 helical membrane-spanning segments follow: residues 212-232 (LAGIGWQWINLGFLAGGLLLL), 241-261 (IPVSFLLALAGCAAISWMIAP), 264-284 (FAPPMLHLFSGATMLGAFFIA), 298-318 (LIFGALIGILVWLIRVYGGYP), and 320-340 (GVAFAVLLANICVPLIDHYTQ).

It belongs to the NqrB/RnfD family. In terms of assembly, the complex is composed of six subunits: RnfA, RnfB, RnfC, RnfD, RnfE and RnfG. FMN is required as a cofactor.

It is found in the cell inner membrane. Part of a membrane-bound complex that couples electron transfer with translocation of ions across the membrane. The chain is Ion-translocating oxidoreductase complex subunit D from Yersinia enterocolitica serotype O:8 / biotype 1B (strain NCTC 13174 / 8081).